A 150-amino-acid chain; its full sequence is Cilia- and flagella-associated protein 68 (150 aa).

2 mn regions span residues 99-110 (TTYDTSYNNKMP) and 140-150 (KSTYMNSYSKP).

It belongs to the CFAP68 family. Microtubule inner protein component of sperm flagellar doublet microtubules.

The protein localises to the cytoplasm. The protein resides in the cytoskeleton. Its subcellular location is the cilium axoneme. It is found in the flagellum axoneme. It localises to the nucleus. The protein localises to the cell projection. The protein resides in the cilium. Functionally, microtubule inner protein (MIP) part of the dynein-decorated doublet microtubules (DMTs) in cilia axoneme, which is required for motile cilia beating. This is Cilia- and flagella-associated protein 68 from Homo sapiens (Human).